The chain runs to 253 residues: HTH-type transcriptional regulator YdeO (253 aa).

Positions G137–E233 constitute an HTH araC/xylS-type domain. 2 consecutive DNA-binding regions (H-T-H motif) follow at residues K154–Q175 and V200–F223.

In terms of biological role, induces the expression of gadE and mdtEF. Could also regulate the expression of other genes involved in acid resistance. This is HTH-type transcriptional regulator YdeO (ydeO) from Escherichia coli O6:H1 (strain CFT073 / ATCC 700928 / UPEC).